Reading from the N-terminus, the 187-residue chain is Bis(5'-nucleosyl)-tetraphosphatase, symmetrical (187 aa).

The 115-residue stretch at 18-132 (RYQHTIGVME…IFLADYIEPN (115 aa)) folds into the HD domain. His21 provides a ligand contact to ADP. Positions 21, 50, and 51 each coordinate Fe cation. ADP-binding positions include 51-54 (DYAK), His83, 109-110 (HT), Asp127, Arg133, and 170-175 (PIYPDT). Asp127 serves as a coordination point for Fe cation.

It belongs to the Ap4A hydrolase YqeK family. In terms of assembly, homodimer.

The catalysed reaction is P(1),P(4)-bis(5'-adenosyl) tetraphosphate + H2O = 2 ADP + 2 H(+). Hydrolyzes diadenosine 5',5'''-P1,P4-tetraphosphate (Ap4A) to yield ADP. The protein is Bis(5'-nucleosyl)-tetraphosphatase, symmetrical of Halalkalibacterium halodurans (strain ATCC BAA-125 / DSM 18197 / FERM 7344 / JCM 9153 / C-125) (Bacillus halodurans).